The primary structure comprises 429 residues: Glutamate-1-semialdehyde 2,1-aminomutase (429 aa).

An N6-(pyridoxal phosphate)lysine modification is found at lysine 267.

The protein belongs to the class-III pyridoxal-phosphate-dependent aminotransferase family. HemL subfamily. Homodimer. Requires pyridoxal 5'-phosphate as cofactor.

The protein resides in the cytoplasm. It carries out the reaction (S)-4-amino-5-oxopentanoate = 5-aminolevulinate. It participates in porphyrin-containing compound metabolism; protoporphyrin-IX biosynthesis; 5-aminolevulinate from L-glutamyl-tRNA(Glu): step 2/2. This chain is Glutamate-1-semialdehyde 2,1-aminomutase, found in Anaeromyxobacter sp. (strain Fw109-5).